The following is a 258-amino-acid chain: D-beta-hydroxybutyrate dehydrogenase (258 aa).

Residue 8 to 32 participates in NAD(+) binding; the sequence is LVTGSTSGIGLGIAKALAAQGANII. Position 140 (S140) interacts with substrate. The Proton acceptor role is filled by Y153.

This sequence belongs to the short-chain dehydrogenases/reductases (SDR) family.

The enzyme catalyses (R)-3-hydroxybutanoate + NAD(+) = acetoacetate + NADH + H(+). The sequence is that of D-beta-hydroxybutyrate dehydrogenase (hbdH1) from Cupriavidus necator (strain ATCC 17699 / DSM 428 / KCTC 22496 / NCIMB 10442 / H16 / Stanier 337) (Ralstonia eutropha).